Reading from the N-terminus, the 711-residue chain is Polyribonucleotide nucleotidyltransferase (711 aa).

2 residues coordinate Mg(2+): Asp-486 and Asp-492. In terms of domain architecture, KH spans 553–612 (PRIHTIKINPDKIKDVIGKGGSVIRALTEETGTTIEIEDDGTVKIAATDGEKAKHAIRRI). Residues 622 to 690 (GRVYTGKVTR…RQGRIRLSIK (69 aa)) enclose the S1 motif domain. The interval 689 to 711 (IKEATEQSQPAAAPEAPAAEQGE) is disordered. The segment covering 694-711 (EQSQPAAAPEAPAAEQGE) has biased composition (low complexity).

It belongs to the polyribonucleotide nucleotidyltransferase family. Component of the RNA degradosome, which is a multiprotein complex involved in RNA processing and mRNA degradation. Requires Mg(2+) as cofactor.

The protein resides in the cytoplasm. The enzyme catalyses RNA(n+1) + phosphate = RNA(n) + a ribonucleoside 5'-diphosphate. Functionally, involved in mRNA degradation. Catalyzes the phosphorolysis of single-stranded polyribonucleotides processively in the 3'- to 5'-direction. The protein is Polyribonucleotide nucleotidyltransferase of Escherichia coli (strain ATCC 8739 / DSM 1576 / NBRC 3972 / NCIMB 8545 / WDCM 00012 / Crooks).